The following is a 317-amino-acid chain: Phospho-N-acetylmuramoyl-pentapeptide-transferase (317 aa).

The next 9 helical transmembrane spans lie at 3–23 (VIIY…PLFI), 48–68 (GTPT…MIIM), 72–92 (LNSN…IGLI), 112–132 (FLLQ…RFGS), 141–161 (ITWT…FVAV), 171–191 (LDGL…VVSF), 193–213 (WHQY…LGFL), 238–258 (AIAL…IYVI), and 297–317 (VVSV…LSLI).

It belongs to the glycosyltransferase 4 family. MraY subfamily. It depends on Mg(2+) as a cofactor.

The protein localises to the cell membrane. The enzyme catalyses UDP-N-acetyl-alpha-D-muramoyl-L-alanyl-gamma-D-glutamyl-meso-2,6-diaminopimeloyl-D-alanyl-D-alanine + di-trans,octa-cis-undecaprenyl phosphate = di-trans,octa-cis-undecaprenyl diphospho-N-acetyl-alpha-D-muramoyl-L-alanyl-D-glutamyl-meso-2,6-diaminopimeloyl-D-alanyl-D-alanine + UMP. It functions in the pathway cell wall biogenesis; peptidoglycan biosynthesis. Its function is as follows. Catalyzes the initial step of the lipid cycle reactions in the biosynthesis of the cell wall peptidoglycan: transfers peptidoglycan precursor phospho-MurNAc-pentapeptide from UDP-MurNAc-pentapeptide onto the lipid carrier undecaprenyl phosphate, yielding undecaprenyl-pyrophosphoryl-MurNAc-pentapeptide, known as lipid I. This chain is Phospho-N-acetylmuramoyl-pentapeptide-transferase, found in Clostridium acetobutylicum (strain ATCC 824 / DSM 792 / JCM 1419 / IAM 19013 / LMG 5710 / NBRC 13948 / NRRL B-527 / VKM B-1787 / 2291 / W).